A 378-amino-acid chain; its full sequence is MGVSSFYPPLHVQRRRKLFKILQGGFPVRSLLDIGCGDARFLSYLVPCNDQVPIEFLAGIDINEQSIERATEALQVRTEDFLQLRWRPLHIELLLGNIKDFTHYKHVDAVVASEFIEHCQVAEILAFEKLVFGNLKPNVCVVSTPNFEFNTIFEKLSTLTSSISSRTSTNFRHPEHVFEWDRKEFAKWAYKICKRYPEYTVEFTGCGLLNDLIDGDDLLHFRPSSTYGFCTQIAVFHQSKNNAASHCFLKDQNSSILLYKKITYPFMEQLFPPTVQQFMNLLKKAFFDHLFGRHCLLLFQVIAGKCALSVKLPFLFIWESSPLIRHAFHYDDSIYLSYCPELKKSKHKGIALANSFSFRIAKVLKKSRIFIITFHHYV.

D61 contributes to the S-adenosyl-L-methionine binding site. E114, E117, H118, and H176 together coordinate Mg(2+).

Belongs to the methyltransferase superfamily. HEN1 family. Requires Mg(2+) as cofactor.

It is found in the cytoplasm. It catalyses the reaction small RNA 3'-end nucleotide + S-adenosyl-L-methionine = small RNA 3'-end 2'-O-methylnucleotide + S-adenosyl-L-homocysteine + H(+). Its function is as follows. Methyltransferase that adds a 2'-O-methyl group at the 3'-end of small RNAs. The chain is Small RNA 2'-O-methyltransferase from Schizosaccharomyces pombe (strain 972 / ATCC 24843) (Fission yeast).